The following is a 438-amino-acid chain: Ribosomal protein uS12 methylthiotransferase RimO (438 aa).

The MTTase N-terminal domain occupies 1-116; it reads MNVGFISLGC…IWKEIENLLD (116 aa). Residues C10, C46, C79, C147, C151, and C154 each contribute to the [4Fe-4S] cluster site. The Radical SAM core domain occupies 133-363; sequence TTGSNMAYLK…MALQEKISRE (231 aa). Residues 366–435 form the TRAM domain; the sequence is EQKVGNVYKV…DYDLFGELYT (70 aa).

The protein belongs to the methylthiotransferase family. RimO subfamily. [4Fe-4S] cluster is required as a cofactor.

Its subcellular location is the cytoplasm. It carries out the reaction L-aspartate(89)-[ribosomal protein uS12]-hydrogen + (sulfur carrier)-SH + AH2 + 2 S-adenosyl-L-methionine = 3-methylsulfanyl-L-aspartate(89)-[ribosomal protein uS12]-hydrogen + (sulfur carrier)-H + 5'-deoxyadenosine + L-methionine + A + S-adenosyl-L-homocysteine + 2 H(+). In terms of biological role, catalyzes the methylthiolation of an aspartic acid residue of ribosomal protein uS12. The protein is Ribosomal protein uS12 methylthiotransferase RimO of Alkaliphilus oremlandii (strain OhILAs) (Clostridium oremlandii (strain OhILAs)).